We begin with the raw amino-acid sequence, 304 residues long: Probable phytol kinase 2, chloroplastic (304 aa).

Residues 1–59 (MVSLISAHLLSLPSSAPRSRPQSRPPLSPPAAAAAASCSFDLPRPRRLVADGSRRKGTM) constitute a chloroplast transit peptide. 7 helical membrane passes run 68 to 88 (SGLA…LALL), 113 to 133 (IGMV…APFL), 134 to 154 (AAVA…GVMK), 170 to 190 (ELLK…SIFW), 194 to 214 (PIAI…DIVG), 231 to 251 (AGSI…MHYF), and 256 to 276 (FIEE…TAAL).

Belongs to the polyprenol kinase family.

The protein resides in the plastid. The protein localises to the chloroplast membrane. It catalyses the reaction phytol + CTP = phytyl phosphate + CDP + H(+). It participates in cofactor biosynthesis; tocopherol biosynthesis. Functionally, involved in the activation and reutilization of phytol from chlorophyll degradation in plant metabolism, including tocopherol biosynthesis. Catalyzes the conversion of phytol to phytol monophosphate (PMP). This is Probable phytol kinase 2, chloroplastic from Oryza sativa subsp. japonica (Rice).